Reading from the N-terminus, the 1155-residue chain is Eukaryotic translation initiation factor 3 subunit A (1155 aa).

Residues Leu319–Thr502 enclose the PCI domain. 2 disordered regions span residues Gln589 to Gln613 and Ala836 to Arg1155. Composition is skewed to basic and acidic residues over residues Ala836–Asp900, Asp925–Ser987, Ser1004–Pro1057, and Asp1066–Lys1101. Positions Gly1104–Asn1118 are enriched in gly residues. Over residues Pro1125–Asp1145 the composition is skewed to basic and acidic residues.

The protein belongs to the eIF-3 subunit A family. As to quaternary structure, component of the eukaryotic translation initiation factor 3 (eIF-3) complex. The eIF-3 complex interacts with pix.

It is found in the cytoplasm. In terms of biological role, RNA-binding component of the eukaryotic translation initiation factor 3 (eIF-3) complex, which is involved in protein synthesis of a specialized repertoire of mRNAs and, together with other initiation factors, stimulates binding of mRNA and methionyl-tRNAi to the 40S ribosome. The eIF-3 complex specifically targets and initiates translation of a subset of mRNAs involved in cell proliferation. This Drosophila pseudoobscura pseudoobscura (Fruit fly) protein is Eukaryotic translation initiation factor 3 subunit A.